The sequence spans 307 residues: Malate dehydrogenase (307 aa).

Residues 8 to 13 (GAGNVG) and aspartate 32 contribute to the NAD(+) site. Residues arginine 81 and arginine 87 each contribute to the substrate site. Residues asparagine 94 and 117-119 (VSN) each bind NAD(+). Positions 119 and 150 each coordinate substrate. Histidine 174 serves as the catalytic Proton acceptor.

The protein belongs to the LDH/MDH superfamily. MDH type 3 family.

It carries out the reaction (S)-malate + NAD(+) = oxaloacetate + NADH + H(+). Its function is as follows. Catalyzes the reversible oxidation of malate to oxaloacetate. The sequence is that of Malate dehydrogenase from Dehalococcoides mccartyi (strain ATCC BAA-2100 / JCM 16839 / KCTC 5957 / BAV1).